The primary structure comprises 526 residues: Lysine--tRNA ligase (526 aa).

The short motif at 44-52 is the 'HIGH' region element; sequence PSGLPHIGT. A 'KMSKS' region motif is present at residues 290–294; sequence KISKS. Lys293 contacts ATP.

The protein belongs to the class-I aminoacyl-tRNA synthetase family.

The protein resides in the cytoplasm. The catalysed reaction is tRNA(Lys) + L-lysine + ATP = L-lysyl-tRNA(Lys) + AMP + diphosphate. The polypeptide is Lysine--tRNA ligase (Rickettsia typhi (strain ATCC VR-144 / Wilmington)).